An 855-amino-acid polypeptide reads, in one-letter code: Suppressor of tumorigenicity 14 protein (855 aa).

The interval 1-20 (MGSDRARKGGGGPKDFGAGL) is disordered. The Cytoplasmic portion of the chain corresponds to 1 to 55 (MGSDRARKGGGGPKDFGAGLKYNSRHEKVNGLEEGVEFLPVNNVKKVEKHGPGRW). Residues 56 to 76 (VVLAAVLIGLLLVLLGIGFLV) traverse the membrane as a helical; Signal-anchor for type II membrane protein segment. Over 77-855 (WHLQYRDVRV…RDWIKENTGV (779 aa)) the chain is Extracellular. One can recognise an SEA domain in the interval 86 to 203 (VQKVFNGYMR…TSVVAFPTDS (118 aa)). The N-linked (GlcNAc...) asparagine glycan is linked to N109. C214 and C244 form a disulfide bridge. CUB domains follow at residues 214–334 (CSFG…FFQL) and 340–447 (CGGR…YLSY). N-linked (GlcNAc...) asparagine glycosylation occurs at N302. 15 disulfides stabilise this stretch: C340/C366, C397/C410, C453/C464, C459/C477, C471/C486, C488/C501, C496/C514, C508/C523, C525/C537, C532/C550, C544/C559, C567/C579, C574/C593, C587/C602, and C641/C657. LDL-receptor class A domains follow at residues 452 to 487 (PCPGQFTCRTGRCIRKELRCDGWADCTDHSDELNCS), 487 to 524 (SCDAGHQFTCKNKFCKPLFWVCDSVNDCGDNSDEQGCS), 524 to 560 (SCPAQTFRCSNGKCLSKSQQCNGKDDCGDGSDEASCP), and 566 to 603 (TCTKHTYRCLNGLCLSKGNPECDGKEDCSDGSDEKDCD). N-linked (GlcNAc...) asparagine glycosylation occurs at N485. The Peptidase S1 domain occupies 615–854 (VVGGTDADEG…FRDWIKENTG (240 aa)). Residues H656 and D711 each act as charge relay system in the active site. N772 carries N-linked (GlcNAc...) asparagine glycosylation. 2 disulfides stabilise this stretch: C776–C790 and C801–C830. S805 (charge relay system) is an active-site residue.

It belongs to the peptidase S1 family. Interacts with CDCP1. May interact with TMEFF1. Interacts with iripin-3, a serine protease inhibitor from Ixodes ricinus saliva. Interacts with iripin-1, a serine protease inhibitor from Ixodes ricinus saliva.

The protein localises to the membrane. The enzyme catalyses Cleaves various synthetic substrates with Arg or Lys at the P1 position and prefers small side-chain amino acids, such as Ala and Gly, at the P2 position.. In terms of biological role, exhibits trypsin-like activity as defined by cleavage of synthetic substrates with Arg or Lys as the P1 site. Involved in the terminal differentiation of keratinocytes through prostasin (PRSS8) activation and filaggrin (FLG) processing. Proteolytically cleaves and therefore activates TMPRSS13. This is Suppressor of tumorigenicity 14 protein (ST14) from Homo sapiens (Human).